We begin with the raw amino-acid sequence, 142 residues long: Large ribosomal subunit protein cL37 alpha (142 aa).

Residues methionine 1–methionine 62 constitute a chloroplast transit peptide. A disordered region spans residues arginine 123 to valine 142.

Belongs to the chloroplast-specific ribosomal protein cL37 family. Component of the chloroplast large ribosomal subunit (LSU). Mature 70S chloroplast ribosomes of higher plants consist of a small (30S) and a large (50S) subunit. The 30S small subunit contains 1 molecule of ribosomal RNA (16S rRNA) and 24 different proteins. The 50S large subunit contains 3 rRNA molecules (23S, 5S and 4.5S rRNA) and 33 different proteins.

It is found in the plastid. Its subcellular location is the chloroplast. Functionally, component of the chloroplast ribosome (chloro-ribosome), a dedicated translation machinery responsible for the synthesis of chloroplast genome-encoded proteins, including proteins of the transcription and translation machinery and components of the photosynthetic apparatus. The protein is Large ribosomal subunit protein cL37 alpha (PSRP5) of Spinacia oleracea (Spinach).